The chain runs to 204 residues: Putative peroxiredoxin ycf42 (204 aa).

The 159-residue stretch at 5 to 163 folds into the Thioredoxin domain; the sequence is PKIGKTPPNF…LLRILESIQY (159 aa).

It belongs to the peroxiredoxin family. AhpC/Prx1 subfamily.

The protein localises to the plastid. Its subcellular location is the chloroplast. The catalysed reaction is a hydroperoxide + [protein]-dithiol = [protein]-disulfide + an alcohol + H2O. This is Putative peroxiredoxin ycf42 (ycf42) from Trieres chinensis (Marine centric diatom).